The following is a 189-amino-acid chain: Protein GrpE (189 aa).

Positions 1–24 are disordered; that stretch reads MADEQNLDTQNPEAQAAENAAPSD. The segment covering 10 to 24 has biased composition (low complexity); sequence QNPEAQAAENAAPSD.

This sequence belongs to the GrpE family. In terms of assembly, homodimer.

The protein localises to the cytoplasm. Functionally, participates actively in the response to hyperosmotic and heat shock by preventing the aggregation of stress-denatured proteins, in association with DnaK and GrpE. It is the nucleotide exchange factor for DnaK and may function as a thermosensor. Unfolded proteins bind initially to DnaJ; upon interaction with the DnaJ-bound protein, DnaK hydrolyzes its bound ATP, resulting in the formation of a stable complex. GrpE releases ADP from DnaK; ATP binding to DnaK triggers the release of the substrate protein, thus completing the reaction cycle. Several rounds of ATP-dependent interactions between DnaJ, DnaK and GrpE are required for fully efficient folding. The protein is Protein GrpE of Ectopseudomonas mendocina (strain ymp) (Pseudomonas mendocina).